The following is a 149-amino-acid chain: UPF0178 protein VFMJ11_0615 (149 aa).

It belongs to the UPF0178 family.

This chain is UPF0178 protein VFMJ11_0615, found in Aliivibrio fischeri (strain MJ11) (Vibrio fischeri).